The primary structure comprises 72 residues: Beta-defensin 104A (72 aa).

The N-terminal stretch at 1–22 (MRRLVLLLAISLLLYQDLPVRS) is a signal peptide. Cystine bridges form between Cys30–Cys57, Cys37–Cys51, and Cys41–Cys58.

Belongs to the beta-defensin family.

The protein resides in the secreted. Its function is as follows. Has antimicrobial activity. The protein is Beta-defensin 104A (DEFB104A) of Pongo pygmaeus (Bornean orangutan).